We begin with the raw amino-acid sequence, 649 residues long: 1-deoxy-D-xylulose-5-phosphate synthase (649 aa).

Residues histidine 73 and 114 to 116 (SHA) contribute to the thiamine diphosphate site. Aspartate 145 is a binding site for Mg(2+). Thiamine diphosphate-binding positions include 146-147 (GA), asparagine 175, tyrosine 286, and glutamate 367. Asparagine 175 provides a ligand contact to Mg(2+).

Belongs to the transketolase family. DXPS subfamily. As to quaternary structure, homodimer. Requires Mg(2+) as cofactor. It depends on thiamine diphosphate as a cofactor.

The enzyme catalyses D-glyceraldehyde 3-phosphate + pyruvate + H(+) = 1-deoxy-D-xylulose 5-phosphate + CO2. The protein operates within metabolic intermediate biosynthesis; 1-deoxy-D-xylulose 5-phosphate biosynthesis; 1-deoxy-D-xylulose 5-phosphate from D-glyceraldehyde 3-phosphate and pyruvate: step 1/1. In terms of biological role, catalyzes the acyloin condensation reaction between C atoms 2 and 3 of pyruvate and glyceraldehyde 3-phosphate to yield 1-deoxy-D-xylulose-5-phosphate (DXP). This chain is 1-deoxy-D-xylulose-5-phosphate synthase, found in Rhodococcus jostii (strain RHA1).